We begin with the raw amino-acid sequence, 567 residues long: Mitogen-activated protein kinase 16 (567 aa).

The Protein kinase domain maps to 25–316 (YRIEEVIGKG…AEEALADVYF (292 aa)). Residues 31 to 39 (IGKGSYGVV) and lysine 54 each bind ATP. The active-site Proton acceptor is aspartate 151. Phosphothreonine is present on threonine 187. The short motif at 187-189 (TDY) is the TXY element. Tyrosine 189 is subject to Phosphotyrosine. Threonine 192 is modified (phosphothreonine). Disordered stretches follow at residues 428 to 455 (AQQS…ADRN) and 512 to 567 (PAAA…SRWY). Over residues 443 to 453 (SIRDERPRGAD) the composition is skewed to basic and acidic residues. A compositionally biased stretch (polar residues) spans 545–567 (KPNTQYIPQKVSAAQDTAMSRWY).

It belongs to the protein kinase superfamily. CMGC Ser/Thr protein kinase family. MAP kinase subfamily. In terms of processing, dually phosphorylated on Thr-187 and Tyr-189, which activates the enzyme.

The catalysed reaction is L-seryl-[protein] + ATP = O-phospho-L-seryl-[protein] + ADP + H(+). The enzyme catalyses L-threonyl-[protein] + ATP = O-phospho-L-threonyl-[protein] + ADP + H(+). Its activity is regulated as follows. Activated by threonine and tyrosine phosphorylation. The sequence is that of Mitogen-activated protein kinase 16 (MPK16) from Arabidopsis thaliana (Mouse-ear cress).